A 162-amino-acid polypeptide reads, in one-letter code: MQKEPMTIYGYEKLQRELKELKEVERPQIVKEIDIARGHGDLKENAEYHAAKERQLFIEARINELSEILSRTQVVDPATITHEKISFGSTFKVMDLDTEFVYEYTIVGAPESNPDRGFISFYSPLARQLIGKVPGDEINAKLPNGEIDYEVLEVYYKEISFE.

Residues 45–65 (NAEYHAAKERQLFIEARINEL) adopt a coiled-coil conformation.

It belongs to the GreA/GreB family.

Necessary for efficient RNA polymerase transcription elongation past template-encoded arresting sites. The arresting sites in DNA have the property of trapping a certain fraction of elongating RNA polymerases that pass through, resulting in locked ternary complexes. Cleavage of the nascent transcript by cleavage factors such as GreA or GreB allows the resumption of elongation from the new 3'terminus. GreA releases sequences of 2 to 3 nucleotides. In Wolinella succinogenes (strain ATCC 29543 / DSM 1740 / CCUG 13145 / JCM 31913 / LMG 7466 / NCTC 11488 / FDC 602W) (Vibrio succinogenes), this protein is Transcription elongation factor GreA.